A 348-amino-acid chain; its full sequence is Chemokine C-C motif receptor-like 2 (348 aa).

The Extracellular segment spans residues 1–43; it reads MANYTPAPEDDYDVFIEDDLSDDEIEPCTPYDPKILSAQLVPY. A helical transmembrane segment spans residues 44 to 64; the sequence is LYTTVFMVGLLDNILVVFILV. The Cytoplasmic portion of the chain corresponds to 65 to 76; that stretch reads KYKGLRQAENMS. The chain crosses the membrane as a helical span at residues 77–97; it reads FLNLALSNLGFLLTLPFWAYA. Residues 98–110 lie on the Extracellular side of the membrane; the sequence is ASHGEGFDDPLCK. A disulfide bridge links cysteine 109 with cysteine 187. The helical transmembrane segment at 111-131 threads the bilayer; the sequence is ILLLLYSIGLYSEAFFNVLLT. Over 132 to 150 the chain is Cytoplasmic; the sequence is VQRYKEFFHVRRRFSACRT. The chain crosses the membrane as a helical span at residues 151–171; sequence VAGSIFISVLVWVTATLVTLP. Residues 172 to 204 lie on the Extracellular side of the membrane; it reads ELVSYKPQMQSQKYKCFFTGLHFLPADETFWKH. Residues 205 to 225 form a helical membrane-spanning segment; sequence FLTLKMNILGFLLPLFAFVYC. Residues 226 to 244 are Cytoplasmic-facing; that stretch reads YVRMRKTLQFRERNYGLFK. Residues 245 to 265 form a helical membrane-spanning segment; it reads LVFTIMAVFLLMWGPYNIVLF. Residues 266-292 lie on the Extracellular side of the membrane; the sequence is LSAFNEHFSLHGCGSSYNLNKSVQITR. N-linked (GlcNAc...) asparagine glycosylation occurs at asparagine 285. Residues 293 to 313 form a helical membrane-spanning segment; the sequence is IIAATHCCVNPLLYVFLDKAF. Residues 314–348 are Cytoplasmic-facing; that stretch reads RKHLCHLFYLCSDTAPQPTEEPAQGASGEEYHLSS.

Belongs to the G-protein coupled receptor 1 family.

The protein resides in the cell membrane. In terms of biological role, receptor for CCL19 and chemerin/RARRES2. Does not appear to be a signaling receptor, but may have a role in modulating chemokine-triggered immune responses by capturing and internalizing CCL19 or by presenting RARRES2 ligand to CMKLR1, a functional signaling receptor. Plays a critical role for the development of Th2 responses. The sequence is that of Chemokine C-C motif receptor-like 2 (CCRL2) from Bos taurus (Bovine).